Here is a 393-residue protein sequence, read N- to C-terminus: Cobalt-precorrin-5B C(1)-methyltransferase (393 aa).

The tract at residues 1–35 (MSDETRVGEAAEQAATPEKIRKGSARRERGNRTGF) is disordered. Residues 18 to 31 (EKIRKGSARRERGN) show a composition bias toward basic and acidic residues.

It belongs to the CbiD family.

The enzyme catalyses Co-precorrin-5B + S-adenosyl-L-methionine = Co-precorrin-6A + S-adenosyl-L-homocysteine. It participates in cofactor biosynthesis; adenosylcobalamin biosynthesis; cob(II)yrinate a,c-diamide from sirohydrochlorin (anaerobic route): step 6/10. In terms of biological role, catalyzes the methylation of C-1 in cobalt-precorrin-5B to form cobalt-precorrin-6A. The protein is Cobalt-precorrin-5B C(1)-methyltransferase of Dechloromonas aromatica (strain RCB).